The sequence spans 40 residues: Photosystem II reaction center protein J (40 aa).

Residues 8–28 form a helical membrane-spanning segment; that stretch reads IPLWLIGTVVGTPVISLVGIF.

It belongs to the PsbJ family. In terms of assembly, PSII is composed of 1 copy each of membrane proteins PsbA, PsbB, PsbC, PsbD, PsbE, PsbF, PsbH, PsbI, PsbJ, PsbK, PsbL, PsbM, PsbT, PsbX, PsbY, PsbZ, Psb30/Ycf12, at least 3 peripheral proteins of the oxygen-evolving complex and a large number of cofactors. It forms dimeric complexes.

It is found in the plastid. The protein resides in the chloroplast thylakoid membrane. One of the components of the core complex of photosystem II (PSII). PSII is a light-driven water:plastoquinone oxidoreductase that uses light energy to abstract electrons from H(2)O, generating O(2) and a proton gradient subsequently used for ATP formation. It consists of a core antenna complex that captures photons, and an electron transfer chain that converts photonic excitation into a charge separation. This Huperzia lucidula (Shining clubmoss) protein is Photosystem II reaction center protein J.